Reading from the N-terminus, the 229-residue chain is Protein 33K (229 aa).

The segment at methionine 1 to proline 157 is disordered. A compositionally biased stretch (acidic residues) spans threonine 14–aspartate 54. 3 stretches are compositionally biased toward low complexity: residues glutamate 55–proline 64, serine 71–alanine 82, and threonine 100–threonine 122. The tract at residues tyrosine 172–cysteine 199 is necessary for nuclear subcellular location. The tract at residues serine 178–serine 198 is RS-repeat; required for splicing enhancer activity.

It belongs to the adenoviridae splicing factor family. In terms of assembly, homooligomer. Interacts with DBP; this interaction occurs at a unique vertex during genome packaging. Interacts with IVa2; this interaction occurs at a unique vertex during genome packaging and seems to potentiate IVa2 and 33K oligomerization. Phosphorylated in vitro by human PKA and PRKDC. PRKDC inhibits, whereas PKA activates the splicing factor.

Its subcellular location is the host nucleus. Its function is as follows. Promotes alternative splicing of late transcripts by promoting splicing at weak 3' splice sites. Required for the temporal activation of major late pre-mRNA splicing at late times of infection. Induces the splicing and expression of the late capsid vertex protein. In terms of biological role, probably functions as the small terminase that is part of the molecular motor that translocates genomic DNA in empty capsid during DNA packaging. This motor is located at a unique vertex and comprises at least the IVa2 ATPase, the small terminase 33K and probably a portal. Forms a ring-like structure of about 17 nm in which genomic DNA is translocated into the capsid. Stimulates IVa2 ATPase activity in the presence of the viral genome. Once the DNA is packaged, the terminase detaches: the 33K protein is present in the empty particles, but not in the mature virions. Also involved in virion assembly. In Homo sapiens (Human), this protein is Protein 33K.